Here is a 260-residue protein sequence, read N- to C-terminus: Small ribosomal subunit protein uS2 (260 aa).

It belongs to the universal ribosomal protein uS2 family.

This Borreliella burgdorferi (strain ATCC 35210 / DSM 4680 / CIP 102532 / B31) (Borrelia burgdorferi) protein is Small ribosomal subunit protein uS2 (rpsB).